A 203-amino-acid chain; its full sequence is Outer-membrane lipoprotein carrier protein (203 aa).

The N-terminal stretch at M1–A19 is a signal peptide.

The protein belongs to the LolA family. As to quaternary structure, monomer.

Its subcellular location is the periplasm. In terms of biological role, participates in the translocation of lipoproteins from the inner membrane to the outer membrane. Only forms a complex with a lipoprotein if the residue after the N-terminal Cys is not an aspartate (The Asp acts as a targeting signal to indicate that the lipoprotein should stay in the inner membrane). The protein is Outer-membrane lipoprotein carrier protein of Shewanella amazonensis (strain ATCC BAA-1098 / SB2B).